A 376-amino-acid chain; its full sequence is Chaperone protein DnaJ (376 aa).

Residues 5 to 69 enclose the J domain; sequence DYYEVLGVSK…QKRAQYDQYG (65 aa). A CR-type zinc finger spans residues 133-215; that stretch reads GKDAEIEIPR…CHGKGRVTKT (83 aa). Zn(2+) contacts are provided by cysteine 146, cysteine 149, cysteine 163, cysteine 166, cysteine 189, cysteine 192, cysteine 203, and cysteine 206. 4 CXXCXGXG motif repeats span residues 146–153, 163–170, 189–196, and 203–210; these read CDTCHGSG, CSHCGGKG, CQYCNGTG, and CPTCHGKG.

It belongs to the DnaJ family. Homodimer. Requires Zn(2+) as cofactor.

Its subcellular location is the cytoplasm. Participates actively in the response to hyperosmotic and heat shock by preventing the aggregation of stress-denatured proteins and by disaggregating proteins, also in an autonomous, DnaK-independent fashion. Unfolded proteins bind initially to DnaJ; upon interaction with the DnaJ-bound protein, DnaK hydrolyzes its bound ATP, resulting in the formation of a stable complex. GrpE releases ADP from DnaK; ATP binding to DnaK triggers the release of the substrate protein, thus completing the reaction cycle. Several rounds of ATP-dependent interactions between DnaJ, DnaK and GrpE are required for fully efficient folding. Also involved, together with DnaK and GrpE, in the DNA replication of plasmids through activation of initiation proteins. In Listeria monocytogenes serotype 4b (strain CLIP80459), this protein is Chaperone protein DnaJ.